The sequence spans 97 residues: Large ribosomal subunit protein eL21 (97 aa).

Residues M1–G24 are compositionally biased toward basic residues. Residues M1–L25 are disordered.

This sequence belongs to the eukaryotic ribosomal protein eL21 family.

The chain is Large ribosomal subunit protein eL21 (rpl21e) from Pyrococcus horikoshii (strain ATCC 700860 / DSM 12428 / JCM 9974 / NBRC 100139 / OT-3).